Reading from the N-terminus, the 467-residue chain is Glutamate--tRNA ligase (467 aa).

Positions 9–19 match the 'HIGH' region motif; that stretch reads PSPTGYLHIGG. Residues 237–241 carry the 'KMSKS' region motif; that stretch reads KLSKR. K240 is an ATP binding site.

The protein belongs to the class-I aminoacyl-tRNA synthetase family. Glutamate--tRNA ligase type 1 subfamily. As to quaternary structure, monomer.

It is found in the cytoplasm. The catalysed reaction is tRNA(Glu) + L-glutamate + ATP = L-glutamyl-tRNA(Glu) + AMP + diphosphate. In terms of biological role, catalyzes the attachment of glutamate to tRNA(Glu) in a two-step reaction: glutamate is first activated by ATP to form Glu-AMP and then transferred to the acceptor end of tRNA(Glu). The chain is Glutamate--tRNA ligase from Xylella fastidiosa (strain M12).